The chain runs to 81 residues: Serine/arginine-rich splicing factor 6 (81 aa).

The span at 1 to 48 (RSRSRSRRSSRSRSRSISKSRSRSRSRSKGRSRSRSKGRKSRSKSKSK) shows a compositional bias: basic residues. The interval 1 to 81 (RSRSRSRRSS…SRSRSRSRSP (81 aa)) is disordered. Over residues 62–71 (RSKDEYEKSR) the composition is skewed to basic and acidic residues. Basic residues predominate over residues 72 to 81 (SRSRSRSRSP).

It belongs to the splicing factor SR family. Binds SREK1/SFRS12. Interacts with DYRK1A. In terms of processing, extensively phosphorylated on serine residues in the RS domain. Phosphorylated by DYRK1A, probably in the RS domain. Phosphorylation by DYRK1A modulates alternative splice site selection and inhibits the expression of MAPT/Tau exon 10.

The protein resides in the nucleus. The protein localises to the nucleus speckle. Functionally, plays a role in constitutive splicing and modulates the selection of alternative splice sites. Plays a role in the alternative splicing of MAPT/Tau exon 10. Binds to alternative exons of TNC pre-mRNA and promotes the expression of alternatively spliced TNC. Plays a role in wound healing and in the regulation of keratinocyte differentiation and proliferation via its role in alternative splicing. This Oryctolagus cuniculus (Rabbit) protein is Serine/arginine-rich splicing factor 6 (SRSF6).